A 397-amino-acid polypeptide reads, in one-letter code: ORC1-type DNA replication protein 1 (397 aa).

Residues 67–71 (TGKTA), tyrosine 208, and arginine 220 contribute to the ATP site.

It belongs to the CDC6/cdc18 family.

In terms of biological role, involved in regulation of DNA replication. The protein is ORC1-type DNA replication protein 1 (cdc6-1) of Sulfolobus acidocaldarius (strain ATCC 33909 / DSM 639 / JCM 8929 / NBRC 15157 / NCIMB 11770).